The sequence spans 204 residues: Guanylate kinase (204 aa).

The region spanning 3–181 (GTLYIVSAAS…AVSEMSAIFT (179 aa)) is the Guanylate kinase-like domain. 10 to 17 (AASGTGKS) provides a ligand contact to ATP.

It belongs to the guanylate kinase family.

The protein localises to the cytoplasm. The catalysed reaction is GMP + ATP = GDP + ADP. Essential for recycling GMP and indirectly, cGMP. This is Guanylate kinase (gmk) from Xylella fastidiosa (strain 9a5c).